The primary structure comprises 440 residues: Protein CANDIDATE G-PROTEIN COUPLED RECEPTOR 7 (440 aa).

The signal sequence occupies residues 1-24; the sequence is MAKMPLSVVVFLLFSAAFLAVSMA. 2 N-linked (GlcNAc...) asparagine glycosylation sites follow: Asn-124 and Asn-162. A run of 5 helical transmembrane segments spans residues 175-195, 207-227, 243-263, 281-301, and 315-335; these read LPTLYSFFFLCYVAFLGFWSY, IHLLMAGLLLIKSLNLICAAE, ILFYIFQFIRVVLLFTVIILI, VLIIVIPLQVLANIASIVIGE, and VFLLVDIICCCAIIFPIVWSI. Asn-351 carries an N-linked (GlcNAc...) asparagine glycan. Helical transmembrane passes span 363-383 and 390-410; these read IVVIGYLYFTRIVVFALKTIA and VSFAAEEIVSLVFYVIMFHMF.

The protein belongs to the LU7TM family.

It localises to the membrane. Functionally, plays a role in plants and microbes interactions. G-protein coupled receptor involved in root growth mediated by the bacterial quorum-sensing signals N-acyl-homoserine lactones (AHLs). This chain is Protein CANDIDATE G-PROTEIN COUPLED RECEPTOR 7, found in Arabidopsis thaliana (Mouse-ear cress).